Here is a 257-residue protein sequence, read N- to C-terminus: Protein patched homolog 1 (257 aa).

The Extracellular portion of the chain corresponds to 1 to 199 (AKLQTGTAYL…LDDILKSFSD (199 aa)). N-linked (GlcNAc...) asparagine glycosylation is found at asparagine 75, asparagine 114, and asparagine 177. Residues 200-220 (ISVIRVASGYLLMLAYACLTM) traverse the membrane as a helical segment. An SSD domain is found at 201–257 (SVIRVASGYLLMLAYACLTMLRWDCAKSQGAVGLAGVLLVALSVAAGLGLCSLIGIS). Topologically, residues 221 to 235 (LRWDCAKSQGAVGLA) are cytoplasmic. A helical membrane pass occupies residues 236 to 256 (GVLLVALSVAAGLGLCSLIGI).

It belongs to the patched family. In terms of processing, glycosylation is necessary for SHH binding. In the eye, detected in neural retina, iris, retinal pigment epithelium, but not in lens.

The protein localises to the membrane. In terms of biological role, acts as a receptor for sonic hedgehog (SHH), indian hedgehog (IHH) and desert hedgehog (DHH). Associates with the smoothened protein (SMO) to transduce the hedgehog's proteins signal. This is Protein patched homolog 1 (PTC1) from Cynops pyrrhogaster (Japanese fire-bellied newt).